A 429-amino-acid polypeptide reads, in one-letter code: Serine hydroxymethyltransferase (429 aa).

120 to 122 (GHI) lines the (6S)-5,6,7,8-tetrahydrofolate pocket. An N6-(pyridoxal phosphate)lysine modification is found at Lys226.

Belongs to the SHMT family. In terms of assembly, homodimer. Requires pyridoxal 5'-phosphate as cofactor.

Its subcellular location is the cytoplasm. It carries out the reaction 5,10-methylenetetrahydromethanopterin + glycine + H2O = 5,6,7,8-tetrahydromethanopterin + L-serine. It catalyses the reaction L-allo-threonine = acetaldehyde + glycine. The protein operates within amino-acid biosynthesis; glycine biosynthesis; glycine from L-serine: step 1/1. In terms of biological role, catalyzes the reversible interconversion of serine and glycine with tetrahydromethanopterin (H4MPT) serving as the one-carbon carrier. The use of tetrahydrofolate (THF or H4PteGlu) as the pteridine substrate is 450-fold less efficient than that of H4MPT. Also exhibits a pteridine-independent aldolase activity toward beta-hydroxyamino acids, producing glycine and aldehydes, via a retro-aldol mechanism. Thus, is able to catalyze the cleavage of L-allo-threonine and L-threo-beta-phenylserine. This is Serine hydroxymethyltransferase from Methanocaldococcus jannaschii (strain ATCC 43067 / DSM 2661 / JAL-1 / JCM 10045 / NBRC 100440) (Methanococcus jannaschii).